The primary structure comprises 397 residues: DnaJ homolog subfamily A member 4 (397 aa).

The J domain maps to 4-70; it reads ETQYYDILGV…RDIYDQGGEQ (67 aa). Residue Ser-18 is modified to Phosphoserine. The segment at 122-206 adopts a CR-type zinc-finger fold; that stretch reads GITKKLALQK…CSGAKVTREK (85 aa). Positions 135, 138, 151, 154, 178, 181, 194, and 197 each coordinate Zn(2+). 4 CXXCXGXG motif repeats span residues 135–142, 151–158, 178–185, and 194–201; these read CEKCEGIG, CPLCKGRG, CIECKGQG, and CENCSGAK. The segment covering 366 to 380 has biased composition (basic and acidic residues); the sequence is EFNPNEQSWRQHREA. The interval 366–397 is disordered; that stretch reads EFNPNEQSWRQHREAYEEDDEEPRAGVQCQTA. Cysteine methyl ester is present on Cys-394. Residue Cys-394 is the site of S-farnesyl cysteine attachment. Positions 395–397 are cleaved as a propeptide — removed in mature form; the sequence is QTA.

Specifically expressed in testis and heart.

The protein localises to the membrane. This chain is DnaJ homolog subfamily A member 4 (Dnaja4), found in Mus musculus (Mouse).